The chain runs to 126 residues: Fluoride-specific ion channel FluC (126 aa).

The next 4 helical transmembrane spans lie at 5–25 (IAVI…FALW), 34–54 (WGTL…LAVF), 67–87 (LVIT…GEVV), and 95–115 (FGLA…LTWA). Na(+) is bound by residues G74 and T77.

Belongs to the fluoride channel Fluc/FEX (TC 1.A.43) family.

The protein resides in the cell inner membrane. It catalyses the reaction fluoride(in) = fluoride(out). Na(+) is not transported, but it plays an essential structural role and its presence is essential for fluoride channel function. Functionally, fluoride-specific ion channel. Important for reducing fluoride concentration in the cell, thus reducing its toxicity. The polypeptide is Fluoride-specific ion channel FluC (Paracidovorax citrulli (strain AAC00-1) (Acidovorax citrulli)).